A 113-amino-acid chain; its full sequence is U11-theraphotoxin-Hhn1t (113 aa).

A signal peptide spans 1-21; it reads MNTVRVTFLLVFVLAVSLGQA. Residues 22 to 74 constitute a propeptide that is removed on maturation; sequence DKDENRMEMQEKTEQGKSYLDFAENLLLQKLEELEAKLLEEDSEESRNSRQKR. The segment covering 60–69 has biased composition (basic and acidic residues); that stretch reads LEEDSEESRN. A disordered region spans residues 60–83; the sequence is LEEDSEESRNSRQKRCIGEGVPCD. Cystine bridges form between cysteine 75-cysteine 90, cysteine 82-cysteine 95, and cysteine 89-cysteine 110.

It belongs to the neurotoxin 14 (magi-1) family. 01 (HNTX-16) subfamily. Expressed by the venom gland.

The protein resides in the secreted. Functionally, probable ion channel inhibitor. This chain is U11-theraphotoxin-Hhn1t, found in Cyriopagopus hainanus (Chinese bird spider).